Reading from the N-terminus, the 331-residue chain is Elongation factor Ts, mitochondrial (331 aa).

The N-terminal 14 residues, 1–14 (MIVSRQVIRSVVRK), are a transit peptide targeting the mitochondrion.

Belongs to the EF-Ts family.

It is found in the mitochondrion. Functionally, associates with the EF-Tu.GDP complex and induces the exchange of GDP to GTP. It remains bound to the aminoacyl-tRNA.EF-Tu.GTP complex up to the GTP hydrolysis stage on the ribosome. The polypeptide is Elongation factor Ts, mitochondrial (Brugia malayi (Filarial nematode worm)).